A 415-amino-acid polypeptide reads, in one-letter code: Glucose-1-phosphate adenylyltransferase (415 aa).

Residues Tyr100, Gly165, 182–183 (EK), and Ser200 each bind alpha-D-glucose 1-phosphate.

This sequence belongs to the bacterial/plant glucose-1-phosphate adenylyltransferase family. As to quaternary structure, homotetramer.

The catalysed reaction is alpha-D-glucose 1-phosphate + ATP + H(+) = ADP-alpha-D-glucose + diphosphate. The protein operates within glycan biosynthesis; glycogen biosynthesis. Its function is as follows. Involved in the biosynthesis of ADP-glucose, a building block required for the elongation reactions to produce glycogen. Catalyzes the reaction between ATP and alpha-D-glucose 1-phosphate (G1P) to produce pyrophosphate and ADP-Glc. The polypeptide is Glucose-1-phosphate adenylyltransferase (Bifidobacterium animalis subsp. lactis (strain AD011)).